Consider the following 671-residue polypeptide: Probable potassium transport system protein Kup (671 aa).

The tract at residues 1–43 (MSQIPSPNDPASTGAAPSSAAVPAGPSATPAPSPTAGFSLPGH) is disordered. Low complexity predominate over residues 10–37 (PASTGAAPSSAAVPAGPSATPAPSPTAG). The next 12 membrane-spanning stretches (helical) occupy residues 52-72 (LAAL…TSPL), 92-112 (VLGV…FKYM), 147-167 (LMLG…TPAI), 181-201 (PAME…LFLF), 209-229 (VGAV…VLGV), 255-275 (GWHG…GEAL), 291-311 (WLGL…ALLL), 323-343 (LLAP…AAIV), 381-401 (IYLP…VLGF), 407-427 (LASA…LLFH), 441-461 (AWPL…ANVV), and 465-485 (DGGW…STWK).

It belongs to the HAK/KUP transporter (TC 2.A.72) family.

The protein localises to the cell inner membrane. The catalysed reaction is K(+)(in) + H(+)(in) = K(+)(out) + H(+)(out). Its function is as follows. Transport of potassium into the cell. Likely operates as a K(+):H(+) symporter. In Anaeromyxobacter sp. (strain K), this protein is Probable potassium transport system protein Kup.